The primary structure comprises 708 residues: MRPWFSSVARRLALGASLGVVALTVIPNLSCAARSVSVAETESLRRLELLRVEIARHDDLYFRKAQPEISDADYDALKQELRELESRFGRRVPRDPAALRDMGDDRVSGFPKARHRMRMLSLEKTTTESGVRAFDQALRRLVKPPAEIAYVVEPKFDGLAISATYEEGRLVRLVTRGNGEEGDDVTAAAGRIRTLPPRLAGAAWPRVVEVRGEVFLTFAEFERINRGRRENGRPTFSSPRNLAVGTLKSLEPEDREVRQLDVVFFGLGAIDGHAAPASQTQLLEWIAQWGLPSVEDARRVDSIDDAWRAVQELGGRRSHLAFPIDGAVIKLDDAVGQTAAGVSEVAPRWAIAFKYAPARVGTRVRGVALQVGRTGVITPVAELEPVALAGARITRATLHNASEMERSDLRVGDFVWIERMGEIIPAVVAVDTAQRGTVSAPFVFPRDCPGCGALLVRALDDANWRCTNDDCPARQVRKVEHYVSDEGVGIRGLGAASVEALVRSQRVREIPDLYTLTAAEVTAHTRLSAAQAARVVDAIQRSRKAPLRRVIAGLGLPGIGPAGANALGARFADLPQFAAARESDLQQVEGLRPESVRALATALSAERTQQLLARLAAAGVGAQSATADAGTLAGKEVVFTGTLPTLSRRRATELVEEAGGRVADRVTAATWRLVAGRNPASKLHQATALGVPVIEEAELLRLAEAAPE.

NAD(+)-binding positions include 71–75 (DADYD), 121–122 (SL), and glutamate 153. The active-site N6-AMP-lysine intermediate is lysine 155. 4 residues coordinate NAD(+): arginine 176, glutamate 213, lysine 330, and lysine 354. Zn(2+) is bound by residues cysteine 448, cysteine 451, cysteine 466, and cysteine 471. Positions 627 to 708 (ADAGTLAGKE…LLRLAEAAPE (82 aa)) constitute a BRCT domain.

It belongs to the NAD-dependent DNA ligase family. LigA subfamily. It depends on Mg(2+) as a cofactor. Requires Mn(2+) as cofactor.

The catalysed reaction is NAD(+) + (deoxyribonucleotide)n-3'-hydroxyl + 5'-phospho-(deoxyribonucleotide)m = (deoxyribonucleotide)n+m + AMP + beta-nicotinamide D-nucleotide.. Functionally, DNA ligase that catalyzes the formation of phosphodiester linkages between 5'-phosphoryl and 3'-hydroxyl groups in double-stranded DNA using NAD as a coenzyme and as the energy source for the reaction. It is essential for DNA replication and repair of damaged DNA. This chain is DNA ligase 2, found in Opitutus terrae (strain DSM 11246 / JCM 15787 / PB90-1).